The sequence spans 675 residues: Zeaxanthin epoxidase, chloroplastic (675 aa).

Residues 1 to 25 (MASTVLYNSLTTSTTVFLRSHLPIS) constitute a chloroplast transit peptide. FAD is bound by residues 92-120 (RILV…KVFE) and 370-383 (KLTW…LLGD). The region spanning 558–622 (ICLSRKEDEP…HGTWITDNEG (65 aa)) is the FHA domain.

FAD is required as a cofactor.

The protein resides in the plastid. The protein localises to the chloroplast thylakoid membrane. The enzyme catalyses all-trans-zeaxanthin + 4 reduced [2Fe-2S]-[ferredoxin] + 2 O2 + 4 H(+) = all-trans-violaxanthin + 4 oxidized [2Fe-2S]-[ferredoxin] + 2 H2O. The protein operates within plant hormone biosynthesis; abscisate biosynthesis. Inhibited by diphenyleneiodonium (DPI). In terms of biological role, converts zeaxanthin into antheraxanthin and subsequently violaxanthin. Involved in the epoxidation of zeaxanthin. The protein is Zeaxanthin epoxidase, chloroplastic of Spinacia oleracea (Spinach).